The following is a 1036-amino-acid chain: Ephrin type-A receptor 6 (1036 aa).

A signal peptide spans 1–22 (MGGCEVREFLLQFGFFLPLLTA). At 23–550 (WPGDCSHVSN…MAAEQGQILV (528 aa)) the chain is on the extracellular side. One can recognise an Eph LBD domain in the interval 34–212 (QVVLLDTTTV…FYKKCPFTVR (179 aa)). Fibronectin type-III domains follow at residues 331–441 (PPSA…TDQD) and 442–537 (APSL…TGDE). 3 N-linked (GlcNAc...) asparagine glycosylation sites follow: N343, N397, and N410. A helical transmembrane segment spans residues 551–571 (IATAAVGGFTLLVILTLFFLI). Topologically, residues 572–1036 (TGRCQWYIKA…MHIQEKGFHV (465 aa)) are cytoplasmic. Y606 and Y612 each carry phosphotyrosine; by autocatalysis. Positions 631–944 (IRIERVIGAG…RNPSALHTLV (314 aa)) constitute a Protein kinase domain. ATP is bound by residues 637-645 (IGAGEFGEV) and K663. Catalysis depends on D798, which acts as the Proton acceptor. Phosphotyrosine; by autocatalysis occurs at positions 831 and 978. One can recognise an SAM domain in the interval 961–1025 (PLFVTVGDWL…VSSIQTLRLH (65 aa)). The PDZ-binding motif lies at 1034-1036 (FHV).

It belongs to the protein kinase superfamily. Tyr protein kinase family. Ephrin receptor subfamily. In terms of assembly, heterotetramer upon binding of the ligand. The heterotetramer is composed of an ephrin dimer and a receptor dimer. Oligomerization is probably required to induce biological responses. Interacts (via SAM domain) with ANKS1A (via SAM domain). Expressed in brain and testis.

Its subcellular location is the membrane. The enzyme catalyses L-tyrosyl-[protein] + ATP = O-phospho-L-tyrosyl-[protein] + ADP + H(+). Functionally, receptor tyrosine kinase which binds promiscuously GPI-anchored ephrin-A family ligands residing on adjacent cells, leading to contact-dependent bidirectional signaling into neighboring cells. The signaling pathway downstream of the receptor is referred to as forward signaling while the signaling pathway downstream of the ephrin ligand is referred to as reverse signaling. The polypeptide is Ephrin type-A receptor 6 (EPHA6) (Homo sapiens (Human)).